The primary structure comprises 317 residues: Transaldolase 2 (317 aa).

Residue K132 is the Schiff-base intermediate with substrate of the active site.

The protein belongs to the transaldolase family. Type 1 subfamily. As to quaternary structure, homodimer.

It localises to the cytoplasm. The enzyme catalyses D-sedoheptulose 7-phosphate + D-glyceraldehyde 3-phosphate = D-erythrose 4-phosphate + beta-D-fructose 6-phosphate. It participates in carbohydrate degradation; pentose phosphate pathway; D-glyceraldehyde 3-phosphate and beta-D-fructose 6-phosphate from D-ribose 5-phosphate and D-xylulose 5-phosphate (non-oxidative stage): step 2/3. Functionally, transaldolase is important for the balance of metabolites in the pentose-phosphate pathway. This is Transaldolase 2 from Pectobacterium atrosepticum (strain SCRI 1043 / ATCC BAA-672) (Erwinia carotovora subsp. atroseptica).